The following is a 228-amino-acid chain: Large ribosomal subunit protein bL25 (228 aa).

The segment at 1 to 24 is disordered; it reads MATVMELKATARPKSGKGAARAER.

The protein belongs to the bacterial ribosomal protein bL25 family. CTC subfamily. Part of the 50S ribosomal subunit; part of the 5S rRNA/L5/L18/L25 subcomplex. Contacts the 5S rRNA. Binds to the 5S rRNA independently of L5 and L18.

This is one of the proteins that binds to the 5S RNA in the ribosome where it forms part of the central protuberance. The protein is Large ribosomal subunit protein bL25 of Nitrobacter winogradskyi (strain ATCC 25391 / DSM 10237 / CIP 104748 / NCIMB 11846 / Nb-255).